We begin with the raw amino-acid sequence, 1163 residues long: DNA-directed RNA polymerase subunit beta' (1163 aa).

Zn(2+)-binding residues include Cys59, Cys61, Cys74, and Cys77. Mg(2+) is bound by residues Asp449, Asp451, and Asp453. Zn(2+) is bound by residues Cys794, Cys868, Cys875, and Cys878.

Belongs to the RNA polymerase beta' chain family. In terms of assembly, the RNAP catalytic core consists of 2 alpha, 1 beta, 1 beta' and 1 omega subunit. When a sigma factor is associated with the core the holoenzyme is formed, which can initiate transcription. The cofactor is Mg(2+). Requires Zn(2+) as cofactor.

It catalyses the reaction RNA(n) + a ribonucleoside 5'-triphosphate = RNA(n+1) + diphosphate. DNA-dependent RNA polymerase catalyzes the transcription of DNA into RNA using the four ribonucleoside triphosphates as substrates. This chain is DNA-directed RNA polymerase subunit beta', found in Caldicellulosiruptor saccharolyticus (strain ATCC 43494 / DSM 8903 / Tp8T 6331).